The sequence spans 85 residues: Conotoxin Cap15a (85 aa).

A signal peptide spans 1–23; the sequence is MEKLTFLILVATVLLTIHVLVQS. A propeptide spanning residues 24 to 49 is cleaved from the precursor; it reads VGDKHLKRRPKQYATKHLSALMRGHR. Gln-50 carries the post-translational modification Pyrrolidone carboxylic acid.

This sequence belongs to the conotoxin O2 superfamily. Post-translationally, contains 4 disulfide bonds. As to expression, expressed by the venom duct.

Its subcellular location is the secreted. In Conus capitaneus (Captain cone), this protein is Conotoxin Cap15a.